The sequence spans 304 residues: Homoserine kinase (304 aa).

90–100 serves as a coordination point for ATP; sequence PLARGLGSSAS.

This sequence belongs to the GHMP kinase family. Homoserine kinase subfamily.

Its subcellular location is the cytoplasm. It catalyses the reaction L-homoserine + ATP = O-phospho-L-homoserine + ADP + H(+). The protein operates within amino-acid biosynthesis; L-threonine biosynthesis; L-threonine from L-aspartate: step 4/5. In terms of biological role, catalyzes the ATP-dependent phosphorylation of L-homoserine to L-homoserine phosphate. The chain is Homoserine kinase from Staphylococcus aureus (strain MRSA252).